A 251-amino-acid polypeptide reads, in one-letter code: 5'-nucleotidase SurE (251 aa).

Asp8, Asp9, Ser40, and Asn95 together coordinate a divalent metal cation.

It belongs to the SurE nucleotidase family. The cofactor is a divalent metal cation.

The protein resides in the cytoplasm. The catalysed reaction is a ribonucleoside 5'-phosphate + H2O = a ribonucleoside + phosphate. Functionally, nucleotidase that shows phosphatase activity on nucleoside 5'-monophosphates. In Lawsonia intracellularis (strain PHE/MN1-00), this protein is 5'-nucleotidase SurE.